Consider the following 223-residue polypeptide: ATP phosphoribosyltransferase (223 aa).

This sequence belongs to the ATP phosphoribosyltransferase family. Short subfamily. Heteromultimer composed of HisG and HisZ subunits.

It localises to the cytoplasm. The enzyme catalyses 1-(5-phospho-beta-D-ribosyl)-ATP + diphosphate = 5-phospho-alpha-D-ribose 1-diphosphate + ATP. It participates in amino-acid biosynthesis; L-histidine biosynthesis; L-histidine from 5-phospho-alpha-D-ribose 1-diphosphate: step 1/9. Its function is as follows. Catalyzes the condensation of ATP and 5-phosphoribose 1-diphosphate to form N'-(5'-phosphoribosyl)-ATP (PR-ATP). Has a crucial role in the pathway because the rate of histidine biosynthesis seems to be controlled primarily by regulation of HisG enzymatic activity. In Sphingopyxis alaskensis (strain DSM 13593 / LMG 18877 / RB2256) (Sphingomonas alaskensis), this protein is ATP phosphoribosyltransferase.